We begin with the raw amino-acid sequence, 390 residues long: L-rhamnonate dehydratase (390 aa).

Residues H19 and R45 each coordinate substrate. 3 residues coordinate Mg(2+): D211, E237, and E265. The Proton acceptor role is filled by H315. Substrate is bound at residue E335.

Belongs to the mandelate racemase/muconate lactonizing enzyme family. RhamD subfamily. Requires Mg(2+) as cofactor.

It carries out the reaction L-rhamnonate = 2-dehydro-3-deoxy-L-rhamnonate + H2O. Functionally, catalyzes the dehydration of L-rhamnonate to 2-keto-3-deoxy-L-rhamnonate (KDR). The chain is L-rhamnonate dehydratase from Saccharopolyspora erythraea (strain ATCC 11635 / DSM 40517 / JCM 4748 / NBRC 13426 / NCIMB 8594 / NRRL 2338).